We begin with the raw amino-acid sequence, 151 residues long: Arginine repressor (151 aa).

The protein belongs to the ArgR family.

The protein resides in the cytoplasm. It functions in the pathway amino-acid biosynthesis; L-arginine biosynthesis [regulation]. Functionally, regulates arginine biosynthesis genes. The sequence is that of Arginine repressor from Heliobacterium modesticaldum (strain ATCC 51547 / Ice1).